The sequence spans 461 residues: Argininosuccinate lyase (461 aa).

It belongs to the lyase 1 family. Argininosuccinate lyase subfamily.

It is found in the cytoplasm. The catalysed reaction is 2-(N(omega)-L-arginino)succinate = fumarate + L-arginine. The protein operates within amino-acid biosynthesis; L-arginine biosynthesis; L-arginine from L-ornithine and carbamoyl phosphate: step 3/3. The sequence is that of Argininosuccinate lyase from Streptococcus gordonii (strain Challis / ATCC 35105 / BCRC 15272 / CH1 / DL1 / V288).